Here is a 332-residue protein sequence, read N- to C-terminus: MAEASPRTETSTDDTDENLMLEPGNAALAVVSDSSDRSRDKNGDQKTMRRLAQNREAARKSRLRKKAYVQQLENSRLKLTQLEQELQRARQQGIFISSSADQSHSMSGNGALAFDTEYARWLEEHNRQVNELRAAVNAHAGDTELRSVVEKIMSHYDEIFKQKGNAAKADVFHVLSGMWKTPAERCFLWLGGFRPSELLKLLSTQLEPLTEQQLSGICNLQQSSQQAEDALSQGMEALQQSLAETLAGSIGSSGSGSTGNVANYMGQMAMAMGKLGTLENFLSQADNLRQQTLQQMQRILTTRQSARALLVISDYSSRLRALSSLWLARPKE.

A disordered region spans residues 1–48 (MAEASPRTETSTDDTDENLMLEPGNAALAVVSDSSDRSRDKNGDQKTM). A compositionally biased stretch (basic and acidic residues) spans 34–47 (SSDRSRDKNGDQKT). The region spanning 44 to 107 (DQKTMRRLAQ…SSADQSHSMS (64 aa)) is the bZIP domain. A basic motif region spans residues 46 to 66 (KTMRRLAQNREAARKSRLRKK). Residues 47–142 (TMRRLAQNRE…RAAVNAHAGD (96 aa)) adopt a coiled-coil conformation. The interval 72–86 (LENSRLKLTQLEQEL) is leucine-zipper. Positions 111–329 (ALAFDTEYAR…RALSSLWLAR (219 aa)) constitute a DOG1 domain.

It belongs to the bZIP family. Binds DNA as a dimer.

The protein localises to the nucleus. Transcriptional activator that binds specifically to the DNA sequence 5'-TGACG-3'. Recognizes ocs elements like the as-1 motif of the cauliflower mosaic virus 35S promoter. Binding to the as-1-like cis elements mediate auxin- and salicylic acid-inducible transcription. Binds to the hexamer motif 5'-ACGTCA-3' of histone gene promoters. This is Transcription factor HBP-1b(c38) from Triticum aestivum (Wheat).